A 532-amino-acid chain; its full sequence is MEKSNETNGYLDSAQAGPAAGPGAPGTAAGRARRCAGFLRRQALVLLTVSGVLAGAGLGAALRGLSLSRTQVTYLAFPGEMLLRMLRMIILPLVVCSLVSGAASLDASCLGRLGGIAVAYFGLTTLSASALAVALAFIIKPGSGAQTLQSSDLGLEDSGPPPVPKETVDSFLDLARNLFPSNLVVAAFRTYATDYKVVTQNSSSGNVTHEKIPIGTEIEGMNILGLVLFALVLGVALKKLGSEGEDLIRFFNSLNEATMVLVSWIMWYVPVGIMFLVGSKIVEMKDIIVLVTSLGKYIFASILGHVIHGGIVLPLIYFVFTRKNPFRFLLGLLAPFATAFATCSSSATLPSMMKCIEENNGVDKRISRFILPIGATVNMDGAAIFQCVAAVFIAQLNNVELNAGQIFTILVTATASSVGAAGVPAGGVLTIAIILEAIGLPTHDLPLILAVDWIVDRTTTVVNVEGDALGAGILHHLNQKATKKGEQELAEVKVEAIPNCKSEEETSPLVTHQNPAGPVASAPELESKESVL.

Met1 is modified (N-acetylmethionine). Positions 1 to 10 are enriched in polar residues; the sequence is MEKSNETNGY. The disordered stretch occupies residues 1–25; it reads MEKSNETNGYLDSAQAGPAAGPGAP. The Cytoplasmic segment spans residues 1–41; the sequence is MEKSNETNGYLDSAQAGPAAGPGAPGTAAGRARRCAGFLRR. The segment covering 14-25 has biased composition (low complexity); the sequence is AQAGPAAGPGAP. Helical transmembrane passes span 42-62, 88-108, and 119-139; these read QALV…GAAL, MIIL…LDAS, and AYFG…AFII. Residues 140-216 are Extracellular-facing; sequence KPGSGAQTLQ…VTHEKIPIGT (77 aa). Asn201 and Asn206 each carry an N-linked (GlcNAc...) asparagine glycan. 6 helical membrane-spanning segments follow: residues 217–237, 257–277, 298–318, 328–348, 373–393, and 418–438; these read EIEG…GVAL, ATMV…MFLV, IFAS…LIYF, FLLG…SSAT, IGAT…AVFI, and VGAA…LEAI. Residues 500 to 532 form a disordered region; the sequence is CKSEEETSPLVTHQNPAGPVASAPELESKESVL. A phosphoserine mark is found at Ser507, Ser527, and Ser530.

The protein belongs to the dicarboxylate/amino acid:cation symporter (DAACS) (TC 2.A.23) family. SLC1A4 subfamily. As to expression, expressed mostly in brain, muscle, and pancreas but detected in all tissues examined.

The protein resides in the membrane. Its subcellular location is the melanosome. The enzyme catalyses L-threonine(in) + Na(+)(in) = L-threonine(out) + Na(+)(out). It catalyses the reaction L-serine(in) + Na(+)(in) = L-serine(out) + Na(+)(out). The catalysed reaction is L-cysteine(in) + Na(+)(in) = L-cysteine(out) + Na(+)(out). It carries out the reaction L-alanine(in) + Na(+)(in) = L-alanine(out) + Na(+)(out). The enzyme catalyses L-proline(in) + Na(+)(in) = L-proline(out) + Na(+)(out). It catalyses the reaction 4-hydroxy-L-proline(in) + Na(+)(in) = 4-hydroxy-L-proline(out) + Na(+)(out). Its function is as follows. Sodium-dependent neutral amino-acid transporter that mediates transport of alanine, serine, cysteine, proline, hydroxyproline and threonine. The polypeptide is Neutral amino acid transporter A (Homo sapiens (Human)).